Here is a 377-residue protein sequence, read N- to C-terminus: Nitric oxide reductase FlRd-NAD(+) reductase (377 aa).

The protein belongs to the FAD-dependent oxidoreductase family. The cofactor is FAD.

The protein localises to the cytoplasm. The catalysed reaction is 2 reduced [nitric oxide reductase rubredoxin domain] + NAD(+) + H(+) = 2 oxidized [nitric oxide reductase rubredoxin domain] + NADH. It functions in the pathway nitrogen metabolism; nitric oxide reduction. In terms of biological role, one of at least two accessory proteins for anaerobic nitric oxide (NO) reductase. Reduces the rubredoxin moiety of NO reductase. The chain is Nitric oxide reductase FlRd-NAD(+) reductase from Escherichia coli (strain SMS-3-5 / SECEC).